We begin with the raw amino-acid sequence, 607 residues long: Glutamine--fructose-6-phosphate aminotransferase [isomerizing] (607 aa).

Catalysis depends on Cys2, which acts as the Nucleophile; for GATase activity. The region spanning 2–217 (CGIIGIIGND…DGDWAVLTRN (216 aa)) is the Glutamine amidotransferase type-2 domain. 2 consecutive SIS domains span residues 283-422 (IGID…ARGA) and 455-597 (VCHD…VDQP). Catalysis depends on Lys602, which acts as the For Fru-6P isomerization activity.

As to quaternary structure, homodimer.

It localises to the cytoplasm. The enzyme catalyses D-fructose 6-phosphate + L-glutamine = D-glucosamine 6-phosphate + L-glutamate. Its function is as follows. Catalyzes the first step in hexosamine metabolism, converting fructose-6P into glucosamine-6P using glutamine as a nitrogen source. This is Glutamine--fructose-6-phosphate aminotransferase [isomerizing] from Brucella suis biovar 1 (strain 1330).